The chain runs to 119 residues: C-X-C motif chemokine 17 (119 aa).

An N-terminal signal peptide occupies residues 1–22; that stretch reads MKLLASPFLLLLPVMLMSMVFS. Positions 75–100 are disordered; it reads CPCDHVKGREKKNRHQKHHRKSQRPS. 2 disulfides stabilise this stretch: Cys75/Cys103 and Cys77/Cys110. Positions 82 to 98 are enriched in basic residues; sequence GREKKNRHQKHHRKSQR.

It belongs to the intercrine alpha (chemokine CxC) family. Likely to undergo an endoproteolytic process to form a four-cysteine-containing mature peptide with a canonical CXC chemokine scaffold after secretion. In terms of tissue distribution, detected in lung, trachea, lung, tongue thyroid, submaxillary gland, epididymis, and uterus tissues and at a lower level in ovary, prostate and in intestinal tissues.

The protein localises to the secreted. In terms of biological role, chemokine that acts as a chemoattractant for monocytes, macrophages and dendritic cells. Plays a role in angiogenesis and possibly in the development of tumors. Acts as an anti-inflammatory in the stomach. May play a role in the innate defense against infections. Activates the C-X-C chemokine receptor GPR35 to induce a rapid and transient rise in the level of intracellular calcium ions. In Mus musculus (Mouse), this protein is C-X-C motif chemokine 17 (Cxcl17).